The sequence spans 923 residues: Mitochondrial 10-formyltetrahydrofolate dehydrogenase (923 aa).

The N-terminal 19 residues, 1–19 (MLRRGSQALRRFSTGRVYF), are a transit peptide targeting the mitochondrion; not cleaved. Positions 23 to 331 (LKLALIGQSL…PASQYFSTGE (309 aa)) are hydrolase domain. Phosphoserine is present on Ser-31. Lys-60 bears the N6-succinyllysine mark. 110–112 (QFI) is a binding site for (6R)-10-formyltetrahydrofolate. His-128 serves as the catalytic Proton donor. Asp-164 contributes to the (6R)-10-formyltetrahydrofolate binding site. The Carrier domain maps to 339-416 (AEEVKVAETI…GFIQKVVRKL (78 aa)). Ser-375 carries the post-translational modification O-(pantetheine 4'-phosphoryl)serine. The segment at 438-923 (MVKMPYQCFI…LKTKTVTLEY (486 aa)) is aldehyde dehydrogenase domain. NADP(+) is bound by residues 592–594 (IPW) and 618–621 (KPAQ). Ser-650 carries the phosphoserine modification. Residues 651 to 656 (GGIAGQ) and 671 to 672 (GS) contribute to the NADP(+) site. N6-succinyllysine is present on Lys-681. Glu-694 serves as the catalytic Proton acceptor. 694-695 (EL) contacts NADP(+). The active-site Proton donor is the Cys-728. Position 778 (Lys-778) interacts with NADP(+). N6-succinyllysine is present on Lys-788. NADP(+) is bound at residue 825-827 (ESF). Lys-903 bears the N6-acetyllysine mark.

In the N-terminal section; belongs to the GART family. It in the C-terminal section; belongs to the aldehyde dehydrogenase family. ALDH1L subfamily. Phosphopantetheinylation at Ser-375 by AASDHPPT is required for the formyltetrahydrofolate dehydrogenase activity. In terms of tissue distribution, highly expressed in pancreas, heart, brain and skeletal muscle.

The protein localises to the mitochondrion. It carries out the reaction (6R)-10-formyltetrahydrofolate + NADP(+) + H2O = (6S)-5,6,7,8-tetrahydrofolate + CO2 + NADPH + H(+). Its function is as follows. Mitochondrial 10-formyltetrahydrofolate dehydrogenase that catalyzes the NADP(+)-dependent conversion of 10-formyltetrahydrofolate to tetrahydrofolate and carbon dioxide. The protein is Mitochondrial 10-formyltetrahydrofolate dehydrogenase of Homo sapiens (Human).